A 314-amino-acid chain; its full sequence is Olfactory receptor 1468 (314 aa).

The Extracellular portion of the chain corresponds to 1 to 25; the sequence is MTEENQTVISQFLLLGLPIPSEHQH. Asn5 carries an N-linked (GlcNAc...) asparagine glycan. A helical membrane pass occupies residues 26 to 49; it reads VFYALFLSMYLTTVLGNLIIIILI. At 50–57 the chain is on the cytoplasmic side; sequence HLDSHLHT. The helical transmembrane segment at 58 to 79 threads the bilayer; that stretch reads PMYLFLSNLSFSDLCFSSVTMP. Topologically, residues 80–100 are extracellular; sequence KLLQNMQSQVPSIPFAGCLTQ. The cysteines at positions 97 and 189 are disulfide-linked. A helical membrane pass occupies residues 101-120; that stretch reads LYFYLYFADLESFLLVAMAY. Residues 121-139 are Cytoplasmic-facing; the sequence is DRYVAICFPLHYMSIMSPK. A helical transmembrane segment spans residues 140–158; that stretch reads LCVSLVVLSWVLTTFHAML. Residues 159–196 lie on the Extracellular side of the membrane; it reads HTLLMARLSFCADNMIPHFFCDISPLLKLSCSDTHVNE. Residues 197–219 traverse the membrane as a helical segment; that stretch reads LVIFVMGGLVIVIPFVLIIVSYA. At 220–236 the chain is on the cytoplasmic side; the sequence is RVVASILKVPSVRGIHK. The chain crosses the membrane as a helical span at residues 237–260; sequence IFSTCGSHLSVVSLFYGTIIGLYL. Residues 261–272 lie on the Extracellular side of the membrane; sequence CPSANNSTVKET. A helical transmembrane segment spans residues 273-292; it reads VMAMMYTVVTPMLNPFIYSL. The Cytoplasmic segment spans residues 293–314; sequence RNRDMKEALIRVLCKKKITFCL.

It belongs to the G-protein coupled receptor 1 family. Olfactory epithelium.

The protein resides in the cell membrane. In terms of biological role, odorant receptor. This chain is Olfactory receptor 1468 (Olr1468), found in Rattus norvegicus (Rat).